A 202-amino-acid chain; its full sequence is Holliday junction branch migration complex subunit RuvA (202 aa).

The segment at 1–62 is domain I; sequence MYEYLHGLIT…DTAQTLYGFS (62 aa). Residues 63–141 are domain II; that stretch reads DFAEKQLFLK…DLAPATDDNT (79 aa). A flexible linker region spans residues 142-151; the sequence is LFTPEVAPTT. The segment at 152–202 is domain III; sequence TENPQLADALAALTALGYRETAVKKITAQLRQFNGQTTNDYLSEGLRLLTK.

This sequence belongs to the RuvA family. As to quaternary structure, homotetramer. Forms an RuvA(8)-RuvB(12)-Holliday junction (HJ) complex. HJ DNA is sandwiched between 2 RuvA tetramers; dsDNA enters through RuvA and exits via RuvB. An RuvB hexamer assembles on each DNA strand where it exits the tetramer. Each RuvB hexamer is contacted by two RuvA subunits (via domain III) on 2 adjacent RuvB subunits; this complex drives branch migration. In the full resolvosome a probable DNA-RuvA(4)-RuvB(12)-RuvC(2) complex forms which resolves the HJ.

It is found in the cytoplasm. Functionally, the RuvA-RuvB-RuvC complex processes Holliday junction (HJ) DNA during genetic recombination and DNA repair, while the RuvA-RuvB complex plays an important role in the rescue of blocked DNA replication forks via replication fork reversal (RFR). RuvA specifically binds to HJ cruciform DNA, conferring on it an open structure. The RuvB hexamer acts as an ATP-dependent pump, pulling dsDNA into and through the RuvAB complex. HJ branch migration allows RuvC to scan DNA until it finds its consensus sequence, where it cleaves and resolves the cruciform DNA. The polypeptide is Holliday junction branch migration complex subunit RuvA (Levilactobacillus brevis (strain ATCC 367 / BCRC 12310 / CIP 105137 / JCM 1170 / LMG 11437 / NCIMB 947 / NCTC 947) (Lactobacillus brevis)).